The chain runs to 42 residues: Potassium channel toxin gamma-KTx 1.4 (42 aa).

Cystine bridges form between cysteine 5-cysteine 23, cysteine 11-cysteine 34, cysteine 20-cysteine 39, and cysteine 24-cysteine 41.

Belongs to the ergtoxin family. Gamma-KTx 1 subfamily. In terms of tissue distribution, expressed by the venom gland.

The protein resides in the secreted. Functionally, blocks Kv11/ERG potassium channels. This is Potassium channel toxin gamma-KTx 1.4 from Centruroides sculpturatus (Arizona bark scorpion).